A 288-amino-acid polypeptide reads, in one-letter code: Glycine--tRNA ligase alpha subunit (288 aa).

Belongs to the class-II aminoacyl-tRNA synthetase family. Tetramer of two alpha and two beta subunits.

It is found in the cytoplasm. It catalyses the reaction tRNA(Gly) + glycine + ATP = glycyl-tRNA(Gly) + AMP + diphosphate. The polypeptide is Glycine--tRNA ligase alpha subunit (Rickettsia canadensis (strain McKiel)).